A 432-amino-acid chain; its full sequence is Neuronal pentraxin-2 (432 aa).

Positions Met1–Ala14 are cleaved as a signal peptide. N-linked (GlcNAc...) asparagine glycosylation is found at Asn149 and Asn190. The 202-residue stretch at Asp224–Cys425 folds into the Pentraxin (PTX) domain. A disulfide bridge connects residues Cys254 and Cys314. The Ca(2+) site is built by Asn278, Glu356, Gln357, Asp358, and Gln368. The N-linked (GlcNAc...) asparagine glycan is linked to Asn394.

Homooligomer or heterooligomer (probably pentamer) with neuronal pentraxin receptor (NPTXR). Ca(2+) serves as cofactor.

Its subcellular location is the secreted. Its function is as follows. Likely to play role in the modification of cellular properties that underlie long-term plasticity. Binds to agar matrix in a calcium-dependent manner. The sequence is that of Neuronal pentraxin-2 (Nptx2) from Rattus norvegicus (Rat).